Reading from the N-terminus, the 191-residue chain is Cytochrome b-245 light chain (191 aa).

The Cytoplasmic segment spans residues 2–7 (GQIEWA). A helical transmembrane segment spans residues 8–30 (MWANEQALASGLILITGGIVATA). The Extracellular segment spans residues 31–35 (GQFTQ). Residues 36–53 (WYLGAYSIAAGVLVCLLE) form a helical membrane-spanning segment. At 54–69 (YPRGKRSKGSTMERCG) the chain is on the cytoplasmic side. An intramembrane segment occupies 70 to 80 (QKYLTRVVKLF). The Cytoplasmic segment spans residues 81-86 (GPLTRN). Residues 87–104 (YYIRAFLHLGLAVPAGFL) traverse the membrane as a helical segment. Position 105 (L105) is a topological domain, extracellular. A helical membrane pass occupies residues 106 to 126 (ATILGTACLAIASGIYLLAAI). The Cytoplasmic portion of the chain corresponds to 127-191 (RGEQWSPIEP…NPMPVNDEVV (65 aa)). Residues 134-191 (IEPKPKERPQIGGTIKQPPSNPPPRPPAEARKKLSEEAAGVPTGGPQENPMPVNDEVV) are disordered. T147 carries the phosphothreonine modification. Residue K149 forms a Glycyl lysine isopeptide (Lys-Gly) (interchain with G-Cter in ubiquitin) linkage. S168 carries the phosphoserine modification.

This sequence belongs to the p22phox family. Component of the phagocyte NADPH oxidase core complex/cytochrome b558 complex, composed of CYBB (heavy chain (beta)) and CYBA (light chain (alpha)). Component of the phagocyte NADPH oxidase complex composed of an obligatory core heterodimer formed by the membrane proteins CYBA and CYBB and the cytosolic regulatory subunits NCF1/p47-phox, NCF2/p67-phox, NCF4/p40-phox and the small GTPase RAC1 or RAC2. Interacts with NCF1 (via SH3 domain). Interacts with SH3PXD2A. Interacts with DUOX1, DUOX2 and TPO. Interacts with NOX4; this interaction mediates superoxide generation. Interacts with calprotectin (S100A8/9). Interacts with GBP7. Interacts with NOXO1. Forms a heterodimer with NOX3 and is essential for activity and cell membrane localization of NOX3. Interacts with NOX1. Phosphorylation at Thr-147 enhances NADPH oxidase activity by promoting NCF1/p47-phox binding. Post-translationally, ubiquitinated at Lys-149 likely by RNF145.

It localises to the cell membrane. Functionally, subunit of NADPH oxidase complexes that is required for the NADPH oxidase activity that generates, in various cell types, superoxide from molecular oxygen utilizing NADPH as an electron donor. Subunit of the phagocyte NADPH oxidase complex that mediates the transfer of electrons from cytosolic NADPH to O2 to produce the superoxide anion (O2(-)). In the activated complex, electrons are first transferred from NADPH to flavin adenine dinucleotide (FAD) and subsequently transferred via two heme molecules to molecular oxygen, producing superoxide through an outer-sphere reaction. Activation of the NADPH oxidase complex is initiated by the assembly of cytosolic subunits of the NADPH oxidase complex with the core NADPH oxidase complex to form a complex at the plasma membrane or phagosomal membrane. This activation process is initiated by phosphorylation dependent binding of the cytosolic NCF1/p47-phox subunit to the C-terminus of CYBA/p22-phox. Aassociates with NOX3 to form a functional NADPH oxidase constitutively generating superoxide. The chain is Cytochrome b-245 light chain from Bison bison (American bison).